We begin with the raw amino-acid sequence, 445 residues long: Phosphoglucosamine mutase (445 aa).

The Phosphoserine intermediate role is filled by Ser-99. 4 residues coordinate Mg(2+): Ser-99, Asp-242, Asp-244, and Asp-246. Ser-99 bears the Phosphoserine mark.

Belongs to the phosphohexose mutase family. Mg(2+) is required as a cofactor. Post-translationally, activated by phosphorylation.

It carries out the reaction alpha-D-glucosamine 1-phosphate = D-glucosamine 6-phosphate. Functionally, catalyzes the conversion of glucosamine-6-phosphate to glucosamine-1-phosphate. This is Phosphoglucosamine mutase from Helicobacter pylori (strain P12).